A 574-amino-acid chain; its full sequence is DNA mismatch repair protein MutL (574 aa).

The protein belongs to the DNA mismatch repair MutL/HexB family.

Functionally, this protein is involved in the repair of mismatches in DNA. It is required for dam-dependent methyl-directed DNA mismatch repair. May act as a 'molecular matchmaker', a protein that promotes the formation of a stable complex between two or more DNA-binding proteins in an ATP-dependent manner without itself being part of a final effector complex. This chain is DNA mismatch repair protein MutL, found in Coxiella burnetii (strain Dugway 5J108-111).